Here is an 845-residue protein sequence, read N- to C-terminus: Alanine--tRNA ligase (845 aa).

Zn(2+) is bound by residues His552, His556, Cys653, and His657.

The protein belongs to the class-II aminoacyl-tRNA synthetase family. Requires Zn(2+) as cofactor.

It is found in the cytoplasm. It catalyses the reaction tRNA(Ala) + L-alanine + ATP = L-alanyl-tRNA(Ala) + AMP + diphosphate. Its function is as follows. Catalyzes the attachment of alanine to tRNA(Ala) in a two-step reaction: alanine is first activated by ATP to form Ala-AMP and then transferred to the acceptor end of tRNA(Ala). Also edits incorrectly charged Ser-tRNA(Ala) and Gly-tRNA(Ala) via its editing domain. This chain is Alanine--tRNA ligase, found in Campylobacter fetus subsp. fetus (strain 82-40).